The chain runs to 374 residues: Probable plastid-lipid-associated protein 3, chloroplastic (374 aa).

The transit peptide at 1 to 46 (MAMPPPLFAAASHASLLLPSPTIHSSTGSRRPFRLPLRSSRRPPVA) directs the protein to the chloroplast. Residues 19 to 148 (PSPTIHSSTG…EDNEEERREE (130 aa)) form a disordered region. Residues 28–54 (GSRRPFRLPLRSSRRPPVAAAAASGVP) are compositionally biased toward low complexity. Composition is skewed to pro residues over residues 64 to 73 (APEPPSQPDP) and 127 to 136 (PAPPPPPPPV).

It belongs to the PAP/fibrillin family.

The protein resides in the plastid. The protein localises to the chloroplast. This is Probable plastid-lipid-associated protein 3, chloroplastic (PAP3) from Oryza sativa subsp. japonica (Rice).